Here is a 602-residue protein sequence, read N- to C-terminus: Elongation factor 4 (602 aa).

One can recognise a tr-type G domain in the interval 2–184 (KHIRNFSIIA…AIVAKVPAPR (183 aa)). Residues 14–19 (DHGKST) and 131–134 (NKMD) contribute to the GTP site.

This sequence belongs to the TRAFAC class translation factor GTPase superfamily. Classic translation factor GTPase family. LepA subfamily.

It localises to the cell inner membrane. It catalyses the reaction GTP + H2O = GDP + phosphate + H(+). In terms of biological role, required for accurate and efficient protein synthesis under certain stress conditions. May act as a fidelity factor of the translation reaction, by catalyzing a one-codon backward translocation of tRNAs on improperly translocated ribosomes. Back-translocation proceeds from a post-translocation (POST) complex to a pre-translocation (PRE) complex, thus giving elongation factor G a second chance to translocate the tRNAs correctly. Binds to ribosomes in a GTP-dependent manner. In Verminephrobacter eiseniae (strain EF01-2), this protein is Elongation factor 4.